Consider the following 132-residue polypeptide: Small ribosomal subunit protein uS12 (132 aa).

Position 89 is a 3-methylthioaspartic acid (Asp-89). A disordered region spans residues 103 to 132 (DTSGVADRRQSRSKYGAKQPKEGGAAKGKK).

This sequence belongs to the universal ribosomal protein uS12 family. In terms of assembly, part of the 30S ribosomal subunit. Contacts proteins S8 and S17. May interact with IF1 in the 30S initiation complex.

Functionally, with S4 and S5 plays an important role in translational accuracy. Its function is as follows. Interacts with and stabilizes bases of the 16S rRNA that are involved in tRNA selection in the A site and with the mRNA backbone. Located at the interface of the 30S and 50S subunits, it traverses the body of the 30S subunit contacting proteins on the other side and probably holding the rRNA structure together. The combined cluster of proteins S8, S12 and S17 appears to hold together the shoulder and platform of the 30S subunit. The sequence is that of Small ribosomal subunit protein uS12 from Chlorobium phaeovibrioides (strain DSM 265 / 1930) (Prosthecochloris vibrioformis (strain DSM 265)).